The primary structure comprises 227 residues: DNA repair protein RecO (227 aa).

The protein belongs to the RecO family.

Involved in DNA repair and RecF pathway recombination. The sequence is that of DNA repair protein RecO from Pseudomonas putida (strain W619).